We begin with the raw amino-acid sequence, 407 residues long: Argininosuccinate synthase (407 aa).

Residues 16–24 (AYSGGLDTS) and alanine 44 contribute to the ATP site. L-citrulline contacts are provided by tyrosine 96 and serine 101. An ATP-binding site is contributed by glycine 126. L-aspartate contacts are provided by threonine 128, asparagine 132, and aspartate 133. L-citrulline is bound at residue asparagine 132. L-citrulline-binding residues include arginine 136, serine 185, serine 194, glutamate 270, and tyrosine 282.

It belongs to the argininosuccinate synthase family. Type 1 subfamily. As to quaternary structure, homotetramer.

It is found in the cytoplasm. It carries out the reaction L-citrulline + L-aspartate + ATP = 2-(N(omega)-L-arginino)succinate + AMP + diphosphate + H(+). Its pathway is amino-acid biosynthesis; L-arginine biosynthesis; L-arginine from L-ornithine and carbamoyl phosphate: step 2/3. The sequence is that of Argininosuccinate synthase from Shewanella putrefaciens (strain CN-32 / ATCC BAA-453).